Here is a 302-residue protein sequence, read N- to C-terminus: MDEKRLTHLRQLEAESIHIIREVAAEFGNPVMLYSIGKDSSVMLHLARKAFFPGTLPFPLLHVDTGWKFSEMYQFRDRTAKEYGFELLVHKNPEGVAMGINPFVHGSAKHTDIMKTEGLKQALNKYGFDAAFGGARRDEEKSRAKERIYSFRDRFHRWDPKNQRPELWHNYNGQINKGESIRVFPLSNWTELDIWQYIFLEKIDIIPLYLAKPRPVVERDGMLLMVDDDRIDLQPGEVISQRMVRFRTLGCWPLTGAVESEAQTLPEIIEEMLVSTTSERQGRMIDRDQSGSMELKKRQGYF.

It belongs to the PAPS reductase family. CysD subfamily. Heterodimer composed of CysD, the smaller subunit, and CysN.

It catalyses the reaction sulfate + ATP + H(+) = adenosine 5'-phosphosulfate + diphosphate. It functions in the pathway sulfur metabolism; hydrogen sulfide biosynthesis; sulfite from sulfate: step 1/3. Its function is as follows. With CysN forms the ATP sulfurylase (ATPS) that catalyzes the adenylation of sulfate producing adenosine 5'-phosphosulfate (APS) and diphosphate, the first enzymatic step in sulfur assimilation pathway. APS synthesis involves the formation of a high-energy phosphoric-sulfuric acid anhydride bond driven by GTP hydrolysis by CysN coupled to ATP hydrolysis by CysD. In Serratia proteamaculans (strain 568), this protein is Sulfate adenylyltransferase subunit 2.